Consider the following 148-residue polypeptide: Secretory phospholipase A2 (148 aa).

The N-terminal stretch at 1-23 (MKLSVLLALGASSLAAAAPAATA) is a signal peptide. Residue Asn61 is glycosylated (N-linked (GlcNAc...) asparagine). An intrachain disulfide couples Cys62 to Cys78. His81 is a catalytic residue. Asp82 is a binding site for Ca(2+).

The protein belongs to the phospholipase A2 family. Ca(2+) is required as a cofactor.

It is found in the secreted. It catalyses the reaction a 1,2-diacyl-sn-glycero-3-phosphocholine + H2O = a 1-acyl-sn-glycero-3-phosphocholine + a fatty acid + H(+). Secretory phospholipase that catalyzes the calcium-dependent hydrolysis of the 2-acyl groups in 3-sn-phosphoglycerides. Increases the ability to utilize host-derived nutrients and lipids, and promotes lipid dropplets accumulation. Plays a role in virulence. The protein is Secretory phospholipase A2 of Arthroderma benhamiae (strain ATCC MYA-4681 / CBS 112371) (Trichophyton mentagrophytes).